We begin with the raw amino-acid sequence, 177 residues long: Centromere protein R (177 aa).

Lys8 participates in a covalent cross-link: Glycyl lysine isopeptide (Lys-Gly) (interchain with G-Cter in SUMO2). The LXXLL motif signature appears at 9-13; that stretch reads LDGLL. Ser17 is subject to Phosphoserine. The DD1 stretch occupies residues 20-50; it reads PSKITRKKSVITYSPTTGTCQMSLFASPTSS. Residue Lys22 forms a Glycyl lysine isopeptide (Lys-Gly) (interchain with G-Cter in SUMO2) linkage. Ser28 is subject to Phosphoserine. Polar residues predominate over residues 41–50; that stretch reads MSLFASPTSS. The interval 41 to 81 is disordered; it reads MSLFASPTSSEEQKHRNGLSNEKRKKLNHPSLTESKESTTK. The short motif at 63–66 is the Nuclear localization signal element; it reads KRKK. A Phosphoserine modification is found at Ser71. Residues 83 to 113 are a coiled coil; it reads NDEFMMLLSKVEKLSEEIMEIMQNLSSIQAL. The short motif at 172–176 is the LXXIL motif element; sequence LKAIL.

Homodimer; mediated by the coiled coil domain. Isoform 3, but not other isoforms, interacts with the cytoplasmic tail of integrin ITGB3. The relevance of the interaction with ITGB3 is however uncertain, since isoform 3 is mainly nuclear. Interacts with CCNA2 and MTA1. Interacts with NFKB1 NF-kappa-B subunit. Component of the CENPA-CAD complex, composed of CENPI, CENPK, CENPL, CENPO, CENPP, CENPQ, CENPR and CENPS. The CENPA-CAD complex interacts with the CENPA-NAC complex, at least composed of CENPA, CENPC, CENPH, CENPM, CENPN, CENPT and CENPU. Interacts with TASOR. Widely expressed. Expressed in spleen, thymus, prostate, ovary, small intestine and white blood cells. Highly expressed in testis and colon. Isoform 4 is expressed in platelets, lymphocytes and granulocytes.

Its subcellular location is the nucleus. The protein resides in the chromosome. The protein localises to the centromere. It is found in the kinetochore. It localises to the cytoplasm. Its function is as follows. Transcription coregulator that can have both coactivator and corepressor functions. Isoform 1, but not other isoforms, is involved in the coactivation of nuclear receptors for retinoid X (RXRs) and thyroid hormone (TRs) in a ligand-dependent fashion. In contrast, it does not coactivate nuclear receptors for retinoic acid, vitamin D, progesterone receptor, nor glucocorticoid. Acts as a coactivator for estrogen receptor alpha. Acts as a transcriptional corepressor via its interaction with the NFKB1 NF-kappa-B subunit, possibly by interfering with the transactivation domain of NFKB1. Induces apoptosis in breast cancer cells, but not in other cancer cells, via a caspase-2 mediated pathway that involves mitochondrial membrane permeabilization but does not require other caspases. May also act as an inhibitor of cyclin A-associated kinase. Also acts a component of the CENPA-CAD (nucleosome distal) complex, a complex recruited to centromeres which is involved in assembly of kinetochore proteins, mitotic progression and chromosome segregation. May be involved in incorporation of newly synthesized CENPA into centromeres via its interaction with the CENPA-NAC complex. This Homo sapiens (Human) protein is Centromere protein R (ITGB3BP).